The chain runs to 463 residues: Proton-coupled folate transporter (463 aa).

The Cytoplasmic segment spans residues 1–27; it reads MVSPDDSPEIRDRPRPRRCLLPASVTV. Residues 28–46 form a helical membrane-spanning segment; sequence EPVIFLSMFALALQGPLAT. The Extracellular portion of the chain corresponds to 47 to 86; the sequence is QYLWDRLSADIGFNGTRTVGCAMNGSKSAGPEQQEVETLT. N-linked (GlcNAc...) asparagine glycans are attached at residues Asn-60 and Asn-70. Cys-67 and Cys-302 form a disulfide bridge. The helical transmembrane segment at 87-112 threads the bilayer; that stretch reads AHWSLYINLGGFLVGLFSVMLLGPWS. The Cytoplasmic portion of the chain corresponds to 113–116; that stretch reads DKVG. The helical transmembrane segment at 117 to 139 threads the bilayer; that stretch reads RRPVLMLPCIGLALQAAVYLLVM. Topologically, residues 140–144 are extracellular; sequence YQELH. A helical transmembrane segment spans residues 145-158; the sequence is VGYFLIGRFISGIS. The Cytoplasmic segment spans residues 159–181; sequence GDFNMILAGCFAYIADVSDRQSR. 2 residues coordinate H(+): Asp-160 and Glu-189. A helical membrane pass occupies residues 182 to 207; the sequence is TFRVAVLEACLGIAGMVASIIGGHWR. Over 208–212 the chain is Extracellular; sequence KAQGY. A helical membrane pass occupies residues 213 to 231; sequence INPFWLVFAVNLFTALYVY. Residues 232–270 are Cytoplasmic-facing; that stretch reads FCVEESVKDKKPARLFTHRHYQSFFRLFTVQGENNRRRK. A helical transmembrane segment spans residues 271-293; it reads LFLYSLALLVVVTVHMGAKNLFV. His-285 is a binding site for H(+). At 294–306 the chain is on the extracellular side; that stretch reads LYELSYPLCWDSD. Residues 307–329 form a helical membrane-spanning segment; sequence LIGYGSAAEHLTYLSSLAGLRLF. At 330 to 335 the chain is on the cytoplasmic side; that stretch reads QLCLAD. Residues 336–355 traverse the membrane as a helical segment; sequence SWVAEMGFISNISGLVVISL. Topologically, residues 356-359 are extracellular; that stretch reads ASTT. Residues 360–380 traverse the membrane as a helical segment; that stretch reads PIMFTGYGLRFFAMATTPVIR. The Cytoplasmic portion of the chain corresponds to 381-392; that stretch reads SKLSKMVEEGEQ. The chain crosses the membrane as a helical span at residues 393-418; the sequence is GALFSSVACVEGLSFLLATGLFNSLY. Topologically, residues 419-426 are extracellular; sequence PATLHFMK. Residues 427–445 form a helical membrane-spanning segment; it reads GFPFLLGALLLLIPAGIIG. Topologically, residues 446–463 are cytoplasmic; that stretch reads LIEVCEQKPMYSQFSEIS.

Belongs to the major facilitator superfamily. SLC46A family. In terms of assembly, monomer.

The protein localises to the cell membrane. Its subcellular location is the apical cell membrane. It localises to the basolateral cell membrane. The protein resides in the endosome membrane. It is found in the cytoplasm. The enzyme catalyses folate(in) + H(+)(in) = folate(out) + H(+)(out). The catalysed reaction is (6S)-5-methyl-5,6,7,8-tetrahydrofolate(in) + H(+)(in) = (6S)-5-methyl-5,6,7,8-tetrahydrofolate(out) + H(+)(out). It catalyses the reaction methotrexate(in) + H(+)(in) = methotrexate(out) + H(+)(out). It carries out the reaction pemetrexed(in) + H(+)(in) = pemetrexed(out) + H(+)(out). In terms of biological role, proton-coupled folate symporter that mediates folate absorption using an H(+) gradient as a driving force. Involved in the intestinal absorption of folates at the brush-border membrane of the proximal jejunum, and the transport from blood to cerebrospinal fluid across the choroid plexus. Functions at acidic pH via alternate outward- and inward-open conformation states. Protonation of residues in the outward open state primes the protein for transport. Binding of folate promotes breaking of salt bridge network and subsequent closure of the extracellular gate, leading to the inward-open state and release of protons and folate. Also able to transport antifolate drugs, such as methotrexate and pemetrexed. Also acts as a lower-affinity, pH-independent heme carrier protein and constitutes the main importer of heme in the intestine. Imports heme in the retina and retinal pigment epithelium, in neurons of the hippocampus, in hepatocytes and in the renal epithelial cells. The sequence is that of Proton-coupled folate transporter from Xenopus laevis (African clawed frog).